The chain runs to 793 residues: E3 UFM1-protein ligase 1 (793 aa).

The residue at position 2 (alanine 2) is an N-acetylalanine. Residues 2-200 (ADAWEEIRRL…RGLFSAITRP (199 aa)) are mediates interaction with DDRGK1. The interval 2–212 (ADAWEEIRRL…VNSLVSKYGF (211 aa)) is required for E3 UFM1-protein ligase activity. The segment at 121–250 (DRLSEEVNDK…KAVFVPDIYS (130 aa)) is involved in CDK5RAP3-binding. The mediates interaction with TRIP4 stretch occupies residues 200-400 (PTAVNSLVSK…NPVHLITEED (201 aa)). The disordered stretch occupies residues 410-473 (VNTNKKDKKD…SSHAGKKKPD (64 aa)). Arginine 433 is subject to Omega-N-methylarginine. Residues serine 458 and serine 462 each carry the phosphoserine modification. The tract at residues 490-683 (IPDAPEEFIS…QLKVTEDPAL (194 aa)) is mediates interaction with CDK5RAP3. Threonine 535 carries the post-translational modification Phosphothreonine. A disordered region spans residues 742 to 769 (NKKSGQGEDPSSDDLDKEQHDVTNTTRK). 2 positions are modified to phosphoserine: serine 752 and serine 753. Basic and acidic residues predominate over residues 758–769 (KEQHDVTNTTRK).

Belongs to the UFL1 family. Catalytic component of the UFM1 ribosome E3 ligase (UREL) complex, composed of UFL1, DDRGK1 and CDK5RAP3. Interacts with E2-like enzyme UFC1. Interacts with RELA. Interacts with NBN; promoting recruitment to double-strand breaks following DNA damage. Interacts (when phosphorylated) with YWHAG/14-3-3-gamma; sequestering UFL1 and preventing its association with PDCD1/PD-1 substrate. Post-translationally, ubiquitinated, leading to its degradation by the proteasome. Interaction with CDK5RAP3 protects both proteins against ubiquitination and degradation via the proteasome. In terms of processing, phosphorylated at Ser-462 by ATM, enhancing protein ligase activity and promoting ATM activation in a positive feedback loop. Phosphorylation at Thr-535 by AMPK promotes its interaction with YWHAG/14-3-3-gamma, thereby preventing UFL1 association with PDCD1/PD-1 substrate. As to expression, ubiquitously expressed with expression detected in brain, skeletal muscle, lung, heart, gall bladder, liver, small intestine, pancreas, spleen and kidney (at protein level). At 8 weeks after birth, high expression in the Purkinje cell layer of the cerebellum.

Its subcellular location is the endoplasmic reticulum membrane. It is found in the cytoplasm. The protein resides in the cytosol. It localises to the nucleus. The protein localises to the chromosome. E3 protein ligase that mediates ufmylation, the covalent attachment of the ubiquitin-like modifier UFM1 to lysine residues on target proteins, and which plays a key role in various processes, such as ribosome recycling, response to DNA damage, interferon response or reticulophagy (also called ER-phagy). Catalyzes ufmylation of many protein, such as CD274/PD-L1, CDK5RAP3, CYB5R3, DDRGK1, EIF6, histone H4, MRE11, P4HB, PDCD1/PD-1, TRIP4, RPN1, RPS20/uS10, RPL10/uL16, RPL26/uL24, SYVN1/HRD1 and TP53/p53. As part of the UREL complex, plays a key role in ribosome recycling by catalyzing mono-ufmylation of RPL26/uL24 subunit of the 60S ribosome. Ufmylation of RPL26/uL24 occurs on free 60S ribosomes following ribosome dissociation: it weakens the junction between post-termination 60S subunits and SEC61 translocons, promoting release and recycling of the large ribosomal subunit from the endoplasmic reticulum membrane. Ufmylation of RPL26/uL24 and subsequent 60S ribosome recycling either take place after normal termination of translation or after ribosome stalling during cotranslational translocation at the endoplasmic reticulum. Involved in reticulophagy in response to endoplasmic reticulum stress by mediating ufmylation of proteins such as CYB5R3 and RPN1, thereby promoting lysosomal degradation of ufmylated proteins. Ufmylation in response to endoplasmic reticulum stress is essential for processes such as hematopoiesis, blood vessel morphogenesis or inflammatory response. Mediates ufmylation of DDRGK1 and CDK5RAP3; the role of these modifications is however unclear: as both DDRGK1 and CDK5RAP3 act as substrate adapters for ufmylation, it is uncertain whether ufmylation of these proteins is, a collateral effect or is required for ufmylation. Acts as a negative regulator of T-cell activation by mediating ufmylation and stabilization of PDCD1/PD-1. Also involved in the response to DNA damage: recruited to double-strand break sites following DNA damage and mediates monoufmylation of histone H4 and ufmylation of MRE11. Mediates ufmylation of TP53/p53, promoting its stability. Catalyzes ufmylation of TRIP4, thereby playing a role in nuclear receptor-mediated transcription. Required for hematopoietic stem cell function and hematopoiesis. This chain is E3 UFM1-protein ligase 1, found in Rattus norvegicus (Rat).